We begin with the raw amino-acid sequence, 449 residues long: Glucose-6-phosphate isomerase (449 aa).

Glutamate 291 acts as the Proton donor in catalysis. Active-site residues include histidine 312 and lysine 426.

The protein belongs to the GPI family.

It localises to the cytoplasm. The enzyme catalyses alpha-D-glucose 6-phosphate = beta-D-fructose 6-phosphate. It functions in the pathway carbohydrate biosynthesis; gluconeogenesis. Its pathway is carbohydrate degradation; glycolysis; D-glyceraldehyde 3-phosphate and glycerone phosphate from D-glucose: step 2/4. In terms of biological role, catalyzes the reversible isomerization of glucose-6-phosphate to fructose-6-phosphate. This is Glucose-6-phosphate isomerase from Enterococcus faecalis (strain ATCC 700802 / V583).